We begin with the raw amino-acid sequence, 204 residues long: uncharacterized protein (204 aa).

Residues 1–10 show a composition bias toward polar residues; the sequence is MQQAITQQEK. 2 disordered regions span residues 1 to 20 and 70 to 99; these read MQQAITQQEKAQPKSVLPNR and DEARKLAEQQRIEDATRTQSKTTEDMKNTE. Positions 131–204 constitute an SPOR domain; it reads VRDSKKFGLQ…TVTDCVVIGM (74 aa).

It to E.coli FtsN repeat regions.

This is an uncharacterized protein from Haemophilus influenzae (strain ATCC 51907 / DSM 11121 / KW20 / Rd).